Reading from the N-terminus, the 790-residue chain is Ribonucleoside-diphosphate reductase large subunit (790 aa).

Substrate contacts are provided by residues T208, 223-224, G254, 436-440, and 621-625; these read SC, NLCTE, and PTVSS. C224 and C453 are joined by a disulfide. N436 (proton acceptor) is an active-site residue. The active-site Cysteine radical intermediate is C438. E440 (proton acceptor) is an active-site residue.

It belongs to the ribonucleoside diphosphate reductase large chain family. In terms of assembly, heterotetramer composed of a homodimer of the large subunit (R1) and a homodimer of the small subunit (R2). Larger multisubunit protein complex are also active, composed of (R1)n(R2)n.

The enzyme catalyses a 2'-deoxyribonucleoside 5'-diphosphate + [thioredoxin]-disulfide + H2O = a ribonucleoside 5'-diphosphate + [thioredoxin]-dithiol. Functionally, ribonucleoside-diphosphate reductase holoenzyme provides the precursors necessary for viral DNA synthesis. Allows virus growth in non-dividing cells, as well as reactivation from latency in infected hosts. Catalyzes the biosynthesis of deoxyribonucleotides from the corresponding ribonucleotides. The sequence is that of Ribonucleoside-diphosphate reductase large subunit from Equus caballus (Horse).